The sequence spans 381 residues: L-lactate dehydrogenase A-like 6B (381 aa).

NAD(+) is bound by residues 101 to 106 (DVDEGR) and R148. Residues R155, N187, and R218 each contribute to the substrate site. NAD(+) is bound at residue N187. H242 serves as the catalytic Proton acceptor. A substrate-binding site is contributed by T297.

This sequence belongs to the LDH/MDH superfamily. LDH family.

The enzyme catalyses (S)-lactate + NAD(+) = pyruvate + NADH + H(+). Its pathway is fermentation; pyruvate fermentation to lactate; (S)-lactate from pyruvate: step 1/1. The chain is L-lactate dehydrogenase A-like 6B (LDHAL6B) from Bos taurus (Bovine).